Consider the following 252-residue polypeptide: ATP synthase subunit a (252 aa).

7 helical membrane-spanning segments follow: residues 6–26 (LEQFAIIQLIPIHIGNLYFSF), 31–51 (LFMLLTISLVLLLVHFVTLNG), 88–108 (FFPLIYVTFTFLLFCNLIGMI), 117–137 (HFIITLGLSFSLFIGITIVGF), 144–164 (FFSILLPQGVPLPLAPFLVLL), 190–212 (LVKILSGFAWTMLSMGGILYLGQ), and 225–245 (LELGVAILQAYVFTILLCIYL).

This sequence belongs to the ATPase A chain family. As to quaternary structure, F-type ATPases have 2 components, CF(1) - the catalytic core - and CF(0) - the membrane proton channel. CF(1) has five subunits: alpha(3), beta(3), gamma(1), delta(1), epsilon(1). CF(0) has three main subunits: a, b and c.

It localises to the mitochondrion inner membrane. Its function is as follows. Mitochondrial membrane ATP synthase (F(1)F(0) ATP synthase or Complex V) produces ATP from ADP in the presence of a proton gradient across the membrane which is generated by electron transport complexes of the respiratory chain. F-type ATPases consist of two structural domains, F(1) - containing the extramembraneous catalytic core and F(0) - containing the membrane proton channel, linked together by a central stalk and a peripheral stalk. During catalysis, ATP synthesis in the catalytic domain of F(1) is coupled via a rotary mechanism of the central stalk subunits to proton translocation. Key component of the proton channel; it may play a direct role in the translocation of protons across the membrane. The protein is ATP synthase subunit a (ATP6) of Marchantia polymorpha (Common liverwort).